The sequence spans 818 residues: Probable helicase MAGATAMA 3 (818 aa).

The UvrD-like helicase ATP-binding domain maps to 259–559 (NKSQKEAIDV…KMLKTQYRMH (301 aa)). Residue 280–287 (GPPGTGKT) coordinates ATP. Composition is skewed to acidic residues over residues 781–790 (PDAPLYEDES) and 798–818 (GDDDFGDGDADQDDVAMAGED). Residues 781–818 (PDAPLYEDESLPVAPYGGDDDFGDGDADQDDVAMAGED) are disordered.

Belongs to the helicase family. Expressed in flowers, siliques, leaves, roots and shoot apex.

It localises to the nucleus. Its function is as follows. Probable helicase that may regulate RNA molecules involved in nucleolar organization and pollen tube guidance. The protein is Probable helicase MAGATAMA 3 (MAA3) of Arabidopsis thaliana (Mouse-ear cress).